A 136-amino-acid chain; its full sequence is Large ribosomal subunit protein uL16 (136 aa).

The protein belongs to the universal ribosomal protein uL16 family. As to quaternary structure, part of the 50S ribosomal subunit.

Functionally, binds 23S rRNA and is also seen to make contacts with the A and possibly P site tRNAs. The chain is Large ribosomal subunit protein uL16 from Rickettsia bellii (strain OSU 85-389).